Reading from the N-terminus, the 528-residue chain is Na(+)/H(+) antiporter NhaB (528 aa).

The next 10 membrane-spanning stretches (helical) occupy residues 20-39 (WFKIAIISFLVINPIVFYFN), 66-86 (PGGLLAIEAVAIGMTSPSQVL), 97-117 (LLLVFMVAGIYFMKQLLLFVF), 139-159 (AFLSAFLDALTVIAVIITVAV), 241-261 (IRMSPVTVPVFFAGITTCFLV), 304-324 (AVIGVWLIAGLALHLASVGLI), 349-369 (EEALPFTALLAVFFAIVAVII), 390-410 (LVIFYIANGLLSMVSDNVFVG), 448-468 (ATPNGQAAFLFLLTSAIAPLI), and 476-496 (VWMALPYTIVLSIVGVLAIQL).

It belongs to the NhaB Na(+)/H(+) (TC 2.A.34) antiporter family.

Its subcellular location is the cell inner membrane. It catalyses the reaction 2 Na(+)(in) + 3 H(+)(out) = 2 Na(+)(out) + 3 H(+)(in). Functionally, na(+)/H(+) antiporter that extrudes sodium in exchange for external protons. The polypeptide is Na(+)/H(+) antiporter NhaB (Shewanella pealeana (strain ATCC 700345 / ANG-SQ1)).